We begin with the raw amino-acid sequence, 38 residues long: Plastocyanin (38 aa).

One can recognise a Plastocyanin-like domain in the interval 1–38; sequence AQTVEVKMGADGGLLVFEPAKAGPHNVVFDEDNIPPGV. H25 provides a ligand contact to Cu cation.

The protein belongs to the plastocyanin family. Cu(2+) is required as a cofactor.

Its subcellular location is the plastid. It localises to the chloroplast thylakoid membrane. Its function is as follows. Participates in electron transfer between P700 and the cytochrome b6-f complex in photosystem I. This Thalassiosira oceanica (Marine diatom) protein is Plastocyanin (PETE).